The following is a 488-amino-acid chain: Bile acid receptor (488 aa).

A Glycyl lysine isopeptide (Lys-Gly) (interchain with G-Cter in SUMO1) cross-link involves residue lysine 133. The nuclear receptor DNA-binding region spans 135-210 (DELCVVCGDR…MGMLAECMYT (76 aa)). The NR C4-type zinc finger occupies 138-158 (CVVCGDRASGYHYNALTCEGC). Phosphoserine; by PKC/PRKCA occurs at positions 146 and 165. N6-acetyllysine; by EP300 is present on lysine 168. The NR C4-type zinc-finger motif lies at 174–198 (CKNGGNCVMDMYMRRKCQECRLRKC). An N6-methyllysine; by SETD7 modification is found at lysine 221. Lysine 228 carries the N6-acetyllysine; by EP300 modification. The NR LBD domain occupies 264–488 (DQQTLLDYIM…PLLCEIWDVQ (225 aa)). A Glycyl lysine isopeptide (Lys-Gly) (interchain with G-Cter in SUMO1) cross-link involves residue lysine 291. Chenodeoxycholate contacts are provided by arginine 347, tyrosine 377, and tyrosine 385. At threonine 458 the chain carries Phosphothreonine; by PKC/PRKCZ. Chenodeoxycholate is bound at residue histidine 463.

Belongs to the nuclear hormone receptor family. NR1 subfamily. In terms of assembly, heterodimer with RXRA; the heterodimerization enhances the binding affinity for LXXLL motifs from coactivators. Binds DNA predominantly as a heterodimer with RXRA. After activation by agonist binding interacts with coactivators. Interacts with PPARGC1A, SMARCA4 and EP300. Interacts with NCOA1, NCOA2, CARM1, SETD7, PRMT1, GPS2, SMARCA4 and MED1. Interacts with XRCC5 and XRCC6; decreasing NR1H4/FXR transactivation activity towards ABCB11/BSEP. Interacts with PAGR1 and NCOA6; indicative for an association with an MLL2/MLL3 complex (ASCOM). Interacts with NR5A2. Acetylated by EP300. Lys-228 as is the major acetylation site for EP300; the dynamicly regulated acetylation inhibits heterodimerization with RXRA and transactivation activity. Deacetylated by SIRT1. Elevated acetylation levels are found in metabolic disease states (mouse models of obesity and type II diabetes). In terms of processing, methylation may increase transactivation of target genes. Post-translationally, phosphorylation by PKC/PRKCA increases transactivation activity by promoting association with PPARGC1A. Sumoylated upon ligand binding. As to expression, expressed in liver and kidney. Expressed in pancreatic beta cells and macrophages. Expressed in the villus epithelium in adult ileum, with highest expression in the intervillus regions. Expression in colon is reduced by inflammation.

The protein resides in the nucleus. Ligand-activated transcription factor. Receptor for bile acids (BAs) such as chenodeoxycholic acid (CDCA), lithocholic acid, deoxycholic acid (DCA) and allocholic acid (ACA). Plays a essential role in BA homeostasis through the regulation of genes involved in BA synthesis, conjugation and enterohepatic circulation. Also regulates lipid and glucose homeostasis and is involved in innate immune response. The FXR-RXR heterodimer binds predominantly to farnesoid X receptor response elements (FXREs) containing two inverted repeats of the consensus sequence 5'-AGGTCA-3' in which the monomers are spaced by 1 nucleotide (IR-1) but also to tandem repeat DR1 sites with lower affinity, and can be activated by either FXR or RXR-specific ligands. It is proposed that monomeric nuclear receptors such as NR5A2/LRH-1 bound to coregulatory nuclear responsive element (NRE) halfsites located in close proximity to FXREs modulate transcriptional activity. In the liver activates transcription of the corepressor NR0B2 thereby indirectly inhibiting CYP7A1 and CYP8B1 (involved in BA synthesis) implicating at least in part histone demethylase KDM1A resulting in epigenomic repression, and SLC10A1/NTCP (involved in hepatic uptake of conjugated BAs). Activates transcription of the repressor MAFG (involved in regulation of BA synthesis). Activates transcription of SLC27A5/BACS and BAAT (involved in BA conjugation), ABCB11/BSEP (involved in bile salt export) by directly recruiting histone methyltransferase CARM1, and ABCC2/MRP2 (involved in secretion of conjugated BAs) and ABCB4 (involved in secretion of phosphatidylcholine in the small intestine). In ileal enterocytes activates FABP6/IBABP (involved in cytosolic transport), SLC51A/OSTA and SLC51B/OSTB (involved in secretion of conjugated BAs to the portal blood), and repressor NR0B2/SHP thereby indirectly inhibiting SLC10A2/ASBT (involved in BA uptake). In the intestine activates FGF15 expression and secretion leading to hepatic CYP7A1 repression; the function also involves the coordinated induction of hepatic KLB/beta-klotho expression. Transcriptional activation of FABP6/IBAP and SCD1 but not of ABCB11 is isoform-specific. Regulates transcription of liver UGT2B4 and SULT2A1 involved in BA detoxification; binding to the UGT2B4 promoter seems to imply a monomeric transactivation independent of RXRA. Modulates lipid homeostasis by activating liver NR0B2/SHP-mediated repression of SREBF1 isoform SREBP-1C (involved in de novo lipogenesis), expression of PLTP (involved in HDL formation), SCARB1 (involved in HDL hepatic uptake), APOE, APOC1, APOC4, VLDLR and SDC1 (involved in the hepatic uptake of LDL and IDL remnants), and inhibiting expression of MTTP (involved in VLDL assembly). Increases expression of APOC2 (promoting lipoprotein lipase activity implicated in triglyceride clearance). Transrepresses APOA1 probably involving a monomeric competition with NR2A1 for binding to a DR1 element. Also reduces triglyceride clearance by inhibiting expression of ANGPTL3 and APOC3 (both involved in inhibition of lipoprotein lipase). Involved in glucose homeostasis by modulating hepatic gluconeogenesis through activation of NR0B2/SHP-mediated repression of respective genes. Modulates glycogen synthesis (inducing phosphorylation of glycogen synthase kinase-3). Modulates glucose-stimulated insulin secretion and is involved in insulin resistance. Involved in intestinal innate immunity. Plays a role in protecting the distal small intestine against bacterial overgrowth and preservation of the epithelial barrier. Down-regulates inflammatory cytokine expression in several types of immune cells including macrophages and mononuclear cells. Mediates transrepression of TLR4-induced cytokine expression; the function seems to require its sumoylation and prevents N-CoR nuclear receptor corepressor clearance from target genes such as IL1B and NOS2. Involved in the TLR9-mediated protective mechanism in intestinal inflammation. Plays a anti-inflammatory role in liver inflammation; proposed to inhibit pro-inflammatory (but not antiapoptotic) NF-kappa-B signaling. In terms of biological role, activates transcription of IBAP and SDC1. In Mus musculus (Mouse), this protein is Bile acid receptor (Nr1h4).